The chain runs to 252 residues: NAC domain-containing protein 83 (252 aa).

The NAC domain occupies 14–160 (LPPGFRFHPT…NWVLCRIFLK (147 aa)). A DNA-binding region spans residues 110 to 166 (VGLKKTLVFYKGKPPHGSRTDWIMHEYRLSSSPPSSMGPTQNWVLCRIFLKKRAGNK). Disordered stretches follow at residues 165 to 194 (NKND…IITT) and 217 to 252 (LNLL…NSFR). Low complexity-rich tracts occupy residues 180–194 (NNNN…IITT) and 219–252 (LLPS…NSFR). A PEST-like region spans residues 213 to 226 (RTTDLNLLPSSPSS).

In terms of assembly, interacts with NAC007/VND4, NAC026/VND5 and NAC030/VND7. Interacts with the mungbean yellow mosaic virus (MYMV) AC1 replication-associated protein. Expressed in xylem and phloem cells in roots and inflorescence stems. Highly expressed in senescent leaves. Expressed in roots, and abscission and dehiscence tissues, such as axils of bracts and abscission zones in cauline leaves and siliques.

It is found in the nucleus. Its function is as follows. Transcriptional repressor that negatively regulates the expression of genes involved in xylem vessel formation. Represses the transcriptional activation activity of NAC030/VND7, which regulates protoxylem vessel differentiation by promoting immature xylem vessel-specific genes expression. Transcriptional activator that regulates the COLD-REGULATED (COR15A and COR15B) and RESPONSIVE TO DEHYDRATION (LTI78/RD29A and LTI65/RD29B) genes by binding directly to their promoters. Mediates signaling crosstalk between salt stress response and leaf aging process. May play a role in DNA replication of mungbean yellow mosaic virus. The sequence is that of NAC domain-containing protein 83 from Arabidopsis thaliana (Mouse-ear cress).